A 396-amino-acid polypeptide reads, in one-letter code: Dimethyladenosine transferase 2, mitochondrial (396 aa).

The transit peptide at 1-19 (MWIPVVGLPRRLRLSALAG) directs the protein to the mitochondrion. Residues 44 to 64 (LSDSSPQLWPEPDFRNPPRKA) are disordered. S-adenosyl-L-methionine contacts are provided by Val75, Glu124, and Asp150. The interval 330–331 (RR) is DNA-binding.

It belongs to the class I-like SAM-binding methyltransferase superfamily. rRNA adenine N(6)-methyltransferase family. KsgA subfamily. In terms of assembly, homodimer. Component of the mitochondrial transcription initiation complex, composed at least of TFB2M, TFAM and POLRMT. In this complex TFAM recruits POLRMT to the promoter whereas TFB2M induces structural changes in POLRMT to enable promoter opening and trapping of the DNA non-template strand. Interacts with mitochondrial RNA polymerase POLRMT. Interacts with TFAM. As to expression, ubiquitously expressed.

It localises to the mitochondrion. The catalysed reaction is adenosine in rRNA + S-adenosyl-L-methionine = N(6)-methyladenosine in rRNA + S-adenosyl-L-homocysteine + H(+). S-adenosyl-L-methionine-dependent rRNA methyltransferase which may methylate two specific adjacent adenosines in the loop of a conserved hairpin near the 3'-end of 12S mitochondrial rRNA. Component of the mitochondrial transcription initiation complex, composed at least of TFB2M, TFAM and POLRMT that is required for basal transcription of mitochondrial DNA. In this complex, TFAM recruits POLRMT to a specific promoter whereas TFB2M induces structural changes in POLRMT to enable promoter opening and trapping of the DNA non-template strand. Stimulates transcription independently of the methyltransferase activity. The sequence is that of Dimethyladenosine transferase 2, mitochondrial from Homo sapiens (Human).